Consider the following 779-residue polypeptide: Cysteine-rich protein 2-binding protein (779 aa).

The tract at residues Met1–Gly34 is disordered. Ser4 bears the Phosphoserine mark. The residue at position 230 (Lys230) is an N6-acetyllysine. Disordered regions lie at residues Ser247–Phe292, Leu314–Thr345, and Pro360–Tyr457. The span at Met255–Lys275 shows a compositional bias: basic and acidic residues. Position 284 is a phosphoserine (Ser284). Lys291 carries the post-translational modification N6-acetyllysine. A compositionally biased stretch (low complexity) spans Leu314–Ser334. Basic and acidic residues-rich tracts occupy residues Arg402 to Gly423 and Lys443 to Pro452. Ser413 carries the phosphoserine modification. Positions Leu635–Arg779 constitute an N-acetyltransferase domain.

Interacts with the LIM 1 domain of CSRP2. Component of the ADA2A-containing complex (ATAC), composed of CSRP2BP, KAT2A, TADA2L, TADA3L, ZZ3, MBIP, WDR5, YEATS2, CCDC101 and DR1. In the complex, it probably interacts directly with KAT2A, MBIP and WDR5.

It localises to the nucleus. It is found in the cytoplasm. Component of the ATAC complex, a complex with histone acetyltransferase activity on histones H3 and H4. May function as a scaffold for the ATAC complex to promote ATAC complex stability. Has also weak histone acetyltransferase activity toward histone H4. Required for the normal progression through G1 and G2/M phases of the cell cycle. In Mus musculus (Mouse), this protein is Cysteine-rich protein 2-binding protein.